The following is a 142-amino-acid chain: UPF0102 protein Bcen2424_0290 (142 aa).

Positions 1-19 (MCHAAPARPEGARGRPPSG) are enriched in low complexity. Residues 1–27 (MCHAAPARPEGARGRPPSGDNFSGAAR) form a disordered region.

Belongs to the UPF0102 family.

The polypeptide is UPF0102 protein Bcen2424_0290 (Burkholderia cenocepacia (strain HI2424)).